The following is a 153-amino-acid chain: H/ACA ribonucleoprotein complex subunit 2 (153 aa).

Residue lysine 3 forms a Glycyl lysine isopeptide (Lys-Gly) (interchain with G-Cter in SUMO2) linkage. Lysine 5 is covalently cross-linked (Glycyl lysine isopeptide (Lys-Gly) (interchain with G-Cter in SUMO); alternate). Residue lysine 5 forms a Glycyl lysine isopeptide (Lys-Gly) (interchain with G-Cter in SUMO1); alternate linkage. Lysine 5 participates in a covalent cross-link: Glycyl lysine isopeptide (Lys-Gly) (interchain with G-Cter in SUMO2); alternate. Serine 19 carries the phosphoserine modification.

It belongs to the eukaryotic ribosomal protein eL8 family. Part of the H/ACA small nucleolar ribonucleoprotein (H/ACA snoRNP) complex, which contains NHP2/NOLA2, GAR1/NOLA1, NOP10/NOLA3, and DKC1/NOLA4, which is presumed to be the catalytic subunit. The complex contains a stable core formed by binding of one or two NOP10-DKC1 heterodimers to NHP2; GAR1 subsequently binds to this core via DKC1. The complex binds a box H/ACA small nucleolar RNA (snoRNA), which may target the specific site of modification within the RNA substrate. During assembly, the complex contains NAF1 instead of GAR1/NOLA1. The complex also interacts with TERC, which contains a 3'-terminal domain related to the box H/ACA snoRNAs. Specific interactions with snoRNAs or TERC are mediated by GAR1 and NHP2. Associates with NOLC1/NOPP140. H/ACA snoRNPs interact with the SMN complex, consisting of SMN1 or SMN2, GEMIN2/SIP1, DDX20/GEMIN3, and GEMIN4. This is mediated by interaction between GAR1 and SMN1 or SMN2. The SMN complex may be required for correct assembly of the H/ACA snoRNP complex. Component of the telomerase holoenzyme complex composed of one molecule of TERT, one molecule of WRAP53/TCAB1, two molecules of H/ACA ribonucleoprotein complex subunits DKC1, NOP10, NHP2 and GAR1, and a telomerase RNA template component (TERC). The telomerase holoenzyme complex is associated with TEP1, SMG6/EST1A and POT1.

Its subcellular location is the nucleus. It localises to the nucleolus. It is found in the cajal body. In terms of biological role, required for ribosome biogenesis and telomere maintenance. Part of the H/ACA small nucleolar ribonucleoprotein (H/ACA snoRNP) complex, which catalyzes pseudouridylation of rRNA. This involves the isomerization of uridine such that the ribose is subsequently attached to C5, instead of the normal N1. Each rRNA can contain up to 100 pseudouridine ('psi') residues, which may serve to stabilize the conformation of rRNAs. May also be required for correct processing or intranuclear trafficking of TERC, the RNA component of the telomerase reverse transcriptase (TERT) holoenzyme. In Mus musculus (Mouse), this protein is H/ACA ribonucleoprotein complex subunit 2 (Nhp2).